Reading from the N-terminus, the 436-residue chain is GDP-mannose 6-dehydrogenase (436 aa).

6 residues coordinate NAD(+): tyrosine 10, valine 11, aspartate 30, lysine 35, threonine 86, and threonine 124. GDP-alpha-D-mannuronate-binding residues include glutamate 161, lysine 210, asparagine 214, histidine 217, asparagine 225, tyrosine 256, tyrosine 257, arginine 259, and glycine 265. Cysteine 268 is an active-site residue. Lysine 271 is a binding site for NAD(+). Lysine 324 provides a ligand contact to GDP-alpha-D-mannuronate. Position 331 (arginine 331) interacts with NAD(+).

It belongs to the UDP-glucose/GDP-mannose dehydrogenase family.

It catalyses the reaction GDP-alpha-D-mannose + 2 NAD(+) + H2O = GDP-alpha-D-mannuronate + 2 NADH + 3 H(+). It functions in the pathway glycan biosynthesis; alginate biosynthesis. Functionally, catalyzes the oxidation of guanosine diphospho-D-mannose (GDP-D-mannose) to GDP-D-mannuronic acid, a precursor for alginate polymerization. The alginate layer causes a mucoid phenotype and is essential for cyst formation. This is GDP-mannose 6-dehydrogenase (algD) from Azotobacter vinelandii.